Here is a 243-residue protein sequence, read N- to C-terminus: Uridylate kinase (243 aa).

An ATP-binding site is contributed by 12–15; the sequence is KLSG. Residues 20-25 are involved in allosteric activation by GTP; sequence GAKGFG. Positions 55 and 59 each coordinate ATP. Residues aspartate 74 and 135–142 each bind UMP; that span reads TGNPYFTT. Positions 163, 169, and 172 each coordinate ATP.

Belongs to the UMP kinase family. Homohexamer.

The protein localises to the cytoplasm. The catalysed reaction is UMP + ATP = UDP + ADP. Its pathway is pyrimidine metabolism; CTP biosynthesis via de novo pathway; UDP from UMP (UMPK route): step 1/1. Its activity is regulated as follows. Allosterically activated by GTP. Inhibited by UTP. In terms of biological role, catalyzes the reversible phosphorylation of UMP to UDP. The sequence is that of Uridylate kinase from Symbiobacterium thermophilum (strain DSM 24528 / JCM 14929 / IAM 14863 / T).